Consider the following 208-residue polypeptide: 3-demethoxyubiquinol 3-hydroxylase (208 aa).

Fe cation is bound by residues E57, E87, H90, E139, E171, and H174.

This sequence belongs to the COQ7 family. Fe cation serves as cofactor.

It localises to the cell membrane. It catalyses the reaction a 5-methoxy-2-methyl-3-(all-trans-polyprenyl)benzene-1,4-diol + AH2 + O2 = a 3-demethylubiquinol + A + H2O. The protein operates within cofactor biosynthesis; ubiquinone biosynthesis. Its function is as follows. Catalyzes the hydroxylation of 2-nonaprenyl-3-methyl-6-methoxy-1,4-benzoquinol during ubiquinone biosynthesis. This Burkholderia vietnamiensis (strain G4 / LMG 22486) (Burkholderia cepacia (strain R1808)) protein is 3-demethoxyubiquinol 3-hydroxylase.